We begin with the raw amino-acid sequence, 559 residues long: NXPE family member 2 (559 aa).

A helical transmembrane segment spans residues 17-37; sequence AIARKLLLMLTFILIFWIIYL.

It belongs to the NXPE family.

The protein resides in the membrane. This is NXPE family member 2 (NXPE2) from Homo sapiens (Human).